Here is a 474-residue protein sequence, read N- to C-terminus: tRNA-2-methylthio-N(6)-dimethylallyladenosine synthase (474 aa).

The MTTase N-terminal domain maps to 3–120 (QKLHIKTWGC…LPEMINQIRG (118 aa)). [4Fe-4S] cluster-binding residues include Cys-12, Cys-49, Cys-83, Cys-157, Cys-161, and Cys-164. Residues 143 to 375 (RAEGPTAFVS…QQRINNQAAQ (233 aa)) form the Radical SAM core domain. One can recognise a TRAM domain in the interval 378-441 (RAMLGTEQRV…TNSLRGEVVR (64 aa)).

The protein belongs to the methylthiotransferase family. MiaB subfamily. Monomer. It depends on [4Fe-4S] cluster as a cofactor.

The protein resides in the cytoplasm. The enzyme catalyses N(6)-dimethylallyladenosine(37) in tRNA + (sulfur carrier)-SH + AH2 + 2 S-adenosyl-L-methionine = 2-methylsulfanyl-N(6)-dimethylallyladenosine(37) in tRNA + (sulfur carrier)-H + 5'-deoxyadenosine + L-methionine + A + S-adenosyl-L-homocysteine + 2 H(+). In terms of biological role, catalyzes the methylthiolation of N6-(dimethylallyl)adenosine (i(6)A), leading to the formation of 2-methylthio-N6-(dimethylallyl)adenosine (ms(2)i(6)A) at position 37 in tRNAs that read codons beginning with uridine. This Histophilus somni (strain 129Pt) (Haemophilus somnus) protein is tRNA-2-methylthio-N(6)-dimethylallyladenosine synthase.